A 275-amino-acid polypeptide reads, in one-letter code: Dermonecrotic toxin LamSicTox-alphaIV1iii (275 aa).

Residue histidine 5 is part of the active site. Residues glutamate 25 and aspartate 27 each contribute to the Mg(2+) site. Histidine 41 acts as the Nucleophile in catalysis. 2 disulfide bridges follow: cysteine 45–cysteine 51 and cysteine 47–cysteine 192. Aspartate 85 serves as a coordination point for Mg(2+).

Belongs to the arthropod phospholipase D family. Class II subfamily. The cofactor is Mg(2+). In terms of tissue distribution, expressed by the venom gland.

The protein localises to the secreted. It carries out the reaction an N-(acyl)-sphingosylphosphocholine = an N-(acyl)-sphingosyl-1,3-cyclic phosphate + choline. The catalysed reaction is an N-(acyl)-sphingosylphosphoethanolamine = an N-(acyl)-sphingosyl-1,3-cyclic phosphate + ethanolamine. It catalyses the reaction a 1-acyl-sn-glycero-3-phosphocholine = a 1-acyl-sn-glycero-2,3-cyclic phosphate + choline. The enzyme catalyses a 1-acyl-sn-glycero-3-phosphoethanolamine = a 1-acyl-sn-glycero-2,3-cyclic phosphate + ethanolamine. In terms of biological role, dermonecrotic toxins cleave the phosphodiester linkage between the phosphate and headgroup of certain phospholipids (sphingolipid and lysolipid substrates), forming an alcohol (often choline) and a cyclic phosphate. This toxin acts on sphingomyelin (SM). It may also act on ceramide phosphoethanolamine (CPE), lysophosphatidylcholine (LPC) and lysophosphatidylethanolamine (LPE), but not on lysophosphatidylserine (LPS), and lysophosphatidylglycerol (LPG). It acts by transphosphatidylation, releasing exclusively cyclic phosphate products as second products. Induces dermonecrosis, hemolysis, increased vascular permeability, edema, inflammatory response, and platelet aggregation. The polypeptide is Dermonecrotic toxin LamSicTox-alphaIV1iii (Loxosceles amazonica (Recluse spider)).